We begin with the raw amino-acid sequence, 766 residues long: Exocyst complex component 6 (766 aa).

Residues 28-90 (NTKQIGDQLE…SLDTSLRQIS (63 aa)) adopt a coiled-coil conformation.

Belongs to the SEC15 family. As to quaternary structure, the exocyst complex is composed of Sec3/Exoc1, Sec5/Exoc2, Sec6/Exoc3, Sec8/Exoc4, Sec10/Exoc5, Sec15/Exoc6, Exo70/Exoc7 and Exo84/Exoc8. Interacts with RAB3, RAB8, RAB11 and RAB27. Detected in developing rhabdomeres in photoreceptor cells.

It is found in the cell projection. The protein localises to the rhabdomere. Functionally, component of the exocyst complex involved in the docking of exocytic vesicles with fusion sites on the plasma membrane. This Drosophila melanogaster (Fruit fly) protein is Exocyst complex component 6.